A 241-amino-acid chain; its full sequence is MEAAADGSAETQSPVEKDSPAKTQSPAQDTSTVSRNSADTGKVLALPEHTKKPKGYLPAESVKILRDWMYKHRFKAYPSEEEKQMLSEKTNLSLSQISNWFINARRRILPDMLKRHGNDPNIGHETGKDAHATHLQSTDASVPAKSGPSGPENVQSLPVWPLPKGQMSGEKLPDPESAPSQNPTVIAQPKKKVKVSVTSPSSPEPVPPEEYPDFSSFQLLVDAAVQRAAELELEKKQEPNP.

2 disordered regions span residues 1–56 (MEAA…PKGY) and 115–213 (RHGN…EYPD). The segment covering 21–39 (AKTQSPAQDTSTVSRNSAD) has biased composition (polar residues). Positions 48 to 111 (EHTKKPKGYL…INARRRILPD (64 aa)) form a DNA-binding region, homeobox; TALE-type.

This sequence belongs to the TALE/TGIF homeobox family.

Its subcellular location is the nucleus. Its function is as follows. May have a transcription role in testis. The chain is Homeobox protein TGIF2LX (TGIF2LX) from Hylobates lar (Lar gibbon).